Here is a 125-residue protein sequence, read N- to C-terminus: Holo-[acyl-carrier-protein] synthase (125 aa).

The Mg(2+) site is built by aspartate 9 and glutamate 58.

It belongs to the P-Pant transferase superfamily. AcpS family. It depends on Mg(2+) as a cofactor.

It localises to the cytoplasm. The enzyme catalyses apo-[ACP] + CoA = holo-[ACP] + adenosine 3',5'-bisphosphate + H(+). Transfers the 4'-phosphopantetheine moiety from coenzyme A to a Ser of acyl-carrier-protein. The chain is Holo-[acyl-carrier-protein] synthase from Shewanella amazonensis (strain ATCC BAA-1098 / SB2B).